Consider the following 529-residue polypeptide: Bifunctional purine biosynthesis protein PurH (529 aa).

One can recognise an MGS-like domain in the interval 1–148; sequence MQQRRPVRRA…KNHKDVAIVV (148 aa).

Belongs to the PurH family.

The enzyme catalyses (6R)-10-formyltetrahydrofolate + 5-amino-1-(5-phospho-beta-D-ribosyl)imidazole-4-carboxamide = 5-formamido-1-(5-phospho-D-ribosyl)imidazole-4-carboxamide + (6S)-5,6,7,8-tetrahydrofolate. It carries out the reaction IMP + H2O = 5-formamido-1-(5-phospho-D-ribosyl)imidazole-4-carboxamide. It functions in the pathway purine metabolism; IMP biosynthesis via de novo pathway; 5-formamido-1-(5-phospho-D-ribosyl)imidazole-4-carboxamide from 5-amino-1-(5-phospho-D-ribosyl)imidazole-4-carboxamide (10-formyl THF route): step 1/1. Its pathway is purine metabolism; IMP biosynthesis via de novo pathway; IMP from 5-formamido-1-(5-phospho-D-ribosyl)imidazole-4-carboxamide: step 1/1. The polypeptide is Bifunctional purine biosynthesis protein PurH (Salmonella schwarzengrund (strain CVM19633)).